Consider the following 868-residue polypeptide: MHEQYTPRDIEAAAQKFWDEQQSFAVTEQPGKDTYYCLSMFPYPSGKLHMGHVRNYTIGDVIARYQRMLGKNVLQPMGWDAFGMPAENAAMKNNVAPAKWTYENIDYMKTQLKSLGLAIDWAREVTTCKPDYYRWEQWLFTRLFEKGIIYRKNGTVNWDPADQTVLANEQVIDGRGWRSGALIEKREIPMYYFRITDYADELLESLDELPGWPEQVKTMQRNWIGKSRGMEVQFPYDQASIGHEGTLKVFTTRPDTLMGATYVAVAAEHPLATQAAQGNPALQAFIDECKSGSVAEADMATQEKKGMATSLLVEHPLTGEKLPVWVANYVLMHYGDGAVMAVPAHDERDFEFAHKYNLPVKAVVRTSAGDEVGSEWQAAYGEHGQLINSAEFDGLDFAGAFDAIEAALIRKELGKSRTQFRLRDWGISRQRYWGCPIPIIHCPSCGDVPVPEDQLPVTLPENVVPDGAGSPLARMPEFYECSCPKCGAAAKRETDTMDTFVESSWYFARYASPNYDKGLVDPKAANHWLPVDQYIGGIEHAILHLLYARFFHKLMRDEGLVTSNEPFKNLLTQGMVVAETYYRVASNGGKDWFNPADVEIERDAKAKIIGARLKTDGLPVEIGGTEKMSKSKNNGVDPQSMIEAYGADTCRLFMMFASPPDMSLEWSDSGVEGASRFLRRVWRLAQAHVSQGLPGKLDVAALDDAQKVIRRAIHAAIKQASTDVGQFHKFNTAIAQVMTVMNVLEKAPQATEQDRALLQEGLEAVTLLLAPITPHISHALWQHLGHAGSVIDAAWPSVDEQALVQDSITLVVQVNGKLRGQVEMPAAASREEVEAAARSNENVLRFIDGLTIRKVIVVPGKLVNIVAN.

Residues 42–52 (PYPSGKLHMGH) carry the 'HIGH' region motif. Positions 627 to 631 (KMSKS) match the 'KMSKS' region motif. Lys630 is an ATP binding site.

It belongs to the class-I aminoacyl-tRNA synthetase family.

The protein localises to the cytoplasm. The catalysed reaction is tRNA(Leu) + L-leucine + ATP = L-leucyl-tRNA(Leu) + AMP + diphosphate. The chain is Leucine--tRNA ligase from Pseudomonas putida (strain ATCC 700007 / DSM 6899 / JCM 31910 / BCRC 17059 / LMG 24140 / F1).